A 520-amino-acid polypeptide reads, in one-letter code: Cytochrome P450 4F3 (520 aa).

A helical transmembrane segment spans residues 11–31; it reads LWPMAASPWLLLLLVGASWLL. The heme site is built by E328 and C468.

The protein belongs to the cytochrome P450 family. Heme is required as a cofactor. In terms of tissue distribution, selectively expressed in blood neutrophils and bone marrow cells. Coexpressed with CYP4F3B in prostate, ileum and trachea. Selectively expressed in liver and kidney. It is also the predominant CYP4F isoform in trachea and tissues of the gastrointestinal tract.

The protein localises to the endoplasmic reticulum membrane. It localises to the microsome membrane. It catalyses the reaction an organic molecule + reduced [NADPH--hemoprotein reductase] + O2 = an alcohol + oxidized [NADPH--hemoprotein reductase] + H2O + H(+). The enzyme catalyses leukotriene B4 + reduced [NADPH--hemoprotein reductase] + O2 = 20-hydroxy-leukotriene B4 + oxidized [NADPH--hemoprotein reductase] + H2O + H(+). The catalysed reaction is 20-hydroxy-leukotriene B4 + reduced [NADPH--hemoprotein reductase] + O2 = 20-oxo-leukotriene B4 + oxidized [NADPH--hemoprotein reductase] + 2 H2O + H(+). It carries out the reaction 20-oxo-leukotriene B4 + reduced [NADPH--hemoprotein reductase] + O2 = 20-carboxy-leukotriene B4 + oxidized [NADPH--hemoprotein reductase] + H2O + 2 H(+). It catalyses the reaction (5Z,8Z,11Z)-eicosatrienoate + reduced [NADPH--hemoprotein reductase] + O2 = 20-hydroxy-(5Z,8Z,11Z)-eicosatrienoate + oxidized [NADPH--hemoprotein reductase] + H2O + H(+). The enzyme catalyses (5Z,8Z,11Z,14Z)-eicosatetraenoate + reduced [NADPH--hemoprotein reductase] + O2 = 20-hydroxy-(5Z,8Z,11Z,14Z)-eicosatetraenoate + oxidized [NADPH--hemoprotein reductase] + H2O + H(+). The catalysed reaction is (5Z,8Z,11Z,14Z,17Z)-eicosapentaenoate + reduced [NADPH--hemoprotein reductase] + O2 = 19-hydroxy-(5Z,8Z,11Z,14Z,17Z)-eicosapentaenoate + oxidized [NADPH--hemoprotein reductase] + H2O + H(+). It carries out the reaction (5Z,8Z,11Z,14Z,17Z)-eicosapentaenoate + reduced [NADPH--hemoprotein reductase] + O2 = 20-hydroxy-(5Z,8Z,11Z,14Z,17Z)-eicosapentaenoate + oxidized [NADPH--hemoprotein reductase] + H2O + H(+). It catalyses the reaction (4Z,7Z,10Z,13Z,16Z,19Z)-docosahexaenoate + reduced [NADPH--hemoprotein reductase] + O2 = 21-hydroxy-(4Z,7Z,10Z,13Z,16Z,19Z)-docosahexaenoate + oxidized [NADPH--hemoprotein reductase] + H2O + H(+). The enzyme catalyses (4Z,7Z,10Z,13Z,16Z,19Z)-docosahexaenoate + reduced [NADPH--hemoprotein reductase] + O2 = 22-hydroxy-(4Z,7Z,10Z,13Z,16Z,19Z)-docosahexaenoate + oxidized [NADPH--hemoprotein reductase] + H2O + H(+). The catalysed reaction is 8,9-epoxy-(5Z,11Z,14Z)-eicosatrienoate + reduced [NADPH--hemoprotein reductase] + O2 = 20-hydroxy-8,9-epoxy-(5Z,11Z,14Z)-eicosatrienoate + oxidized [NADPH--hemoprotein reductase] + H2O + H(+). It carries out the reaction 11,12-epoxy-(5Z,8Z,14Z)-eicosatrienoate + reduced [NADPH--hemoprotein reductase] + O2 = 20-hydroxy-11,12-epoxy-(5Z,8Z,14Z)-eicosatrienoate + oxidized [NADPH--hemoprotein reductase] + H2O + H(+). It catalyses the reaction 14,15-epoxy-(5Z,8Z,11Z)-eicosatrienoate + reduced [NADPH--hemoprotein reductase] + O2 = 20-hydroxy-14,15-epoxy-(5Z,8Z,11Z)-eicosatrienoate + oxidized [NADPH--hemoprotein reductase] + H2O + H(+). The enzyme catalyses 12,13-epoxy-(9Z)-octadecenoate + reduced [NADPH--hemoprotein reductase] + O2 = 18-hydroxy-12,13-epoxy-(9Z)-octadecenoate + oxidized [NADPH--hemoprotein reductase] + H2O + H(+). The catalysed reaction is 9,10-epoxy-(12Z)-octadecenoate + reduced [NADPH--hemoprotein reductase] + O2 = 18-hydroxy-9,10-epoxy-(12Z)-octadecenoate + oxidized [NADPH--hemoprotein reductase] + H2O + H(+). It carries out the reaction 9,10-epoxyoctadecanoate + reduced [NADPH--hemoprotein reductase] + O2 = 18-hydroxy-9,10-epoxy-octadecanoate + oxidized [NADPH--hemoprotein reductase] + H2O + H(+). It catalyses the reaction (12R)-hydroxy-(9Z)-octadecenoate + reduced [NADPH--hemoprotein reductase] + O2 = (12R),18-dihydroxy-(9Z)-octadecenoate + oxidized [NADPH--hemoprotein reductase] + H2O + H(+). The enzyme catalyses 12-hydroxyoctadecanoate + reduced [NADPH--hemoprotein reductase] + O2 = 12,18-dihydroxyoctadecanoate + oxidized [NADPH--hemoprotein reductase] + H2O + H(+). The catalysed reaction is 5-hydroxy-(6E,8Z,11Z,14Z)-eicosatetraenoate + reduced [NADPH--hemoprotein reductase] + O2 = 5,20-dihydroxy-(6E,8Z,11Z,14Z)-eicosatetraenoate + oxidized [NADPH--hemoprotein reductase] + H2O + H(+). It carries out the reaction 8-hydroxy-(5Z,9E,11Z,14Z)-eicosatetraenoate + reduced [NADPH--hemoprotein reductase] + O2 = 8,20-dihydroxy-(5Z,9E,11Z,14Z)-eicosatetraenoate + oxidized [NADPH--hemoprotein reductase] + H2O + H(+). It catalyses the reaction 12-hydroxy-(5Z,8Z,10E,14Z)-eicosatetraenoate + reduced [NADPH--hemoprotein reductase] + O2 = 12,20-dihydroxy-(5Z,8Z,10E,14Z)-eicosatetraenoate + oxidized [NADPH--hemoprotein reductase] + H2O + H(+). The enzyme catalyses 5-hydroxy-(6E,8Z,11Z,14Z,17Z)-eicosapentaenoate + reduced [NADPH--hemoprotein reductase] + O2 = 5,20-dihydroxy-(6E,8Z,11Z,14Z,17Z)-eicosapentaenoate + oxidized [NADPH--hemoprotein reductase] + H2O + H(+). The catalysed reaction is lipoxin A4 + reduced [NADPH--hemoprotein reductase] + O2 = 20-hydroxy-lipoxin A4 + oxidized [NADPH--hemoprotein reductase] + H2O + H(+). It carries out the reaction lipoxin B4 + reduced [NADPH--hemoprotein reductase] + O2 = 20-hydroxy-lipoxin B4 + oxidized [NADPH--hemoprotein reductase] + H2O + H(+). It catalyses the reaction 22-hydroxydocosanoate + reduced [NADPH--hemoprotein reductase] + O2 = 22-oxodocosanoate + oxidized [NADPH--hemoprotein reductase] + 2 H2O + H(+). The enzyme catalyses 22-oxodocosanoate + reduced [NADPH--hemoprotein reductase] + O2 = docosanedioate + oxidized [NADPH--hemoprotein reductase] + H2O + 2 H(+). The catalysed reaction is docosanoate + reduced [NADPH--hemoprotein reductase] + O2 = 22-hydroxydocosanoate + oxidized [NADPH--hemoprotein reductase] + H2O + H(+). It carries out the reaction tetracosanoate + reduced [NADPH--hemoprotein reductase] + O2 = 24-hydroxytetracosanoate + oxidized [NADPH--hemoprotein reductase] + H2O + H(+). It catalyses the reaction hexacosanoate + reduced [NADPH--hemoprotein reductase] + O2 = 26-hydroxyhexacosanoate + oxidized [NADPH--hemoprotein reductase] + H2O + H(+). The enzyme catalyses 26-hydroxyhexacosanoate + reduced [NADPH--hemoprotein reductase] + O2 = 26-oxohexacosanoate + oxidized [NADPH--hemoprotein reductase] + 2 H2O + H(+). The catalysed reaction is 26-oxohexacosanoate + reduced [NADPH--hemoprotein reductase] + O2 = hexacosanedioate + oxidized [NADPH--hemoprotein reductase] + H2O + 2 H(+). It carries out the reaction 3-hydroxyoctadecanoate + reduced [NADPH--hemoprotein reductase] + O2 = 3,18-dihydroxyoctadecanoate + oxidized [NADPH--hemoprotein reductase] + H2O + H(+). It catalyses the reaction 3-hydroxyhexadecanoate + reduced [NADPH--hemoprotein reductase] + O2 = 3,16-dihydroxyhexadecanoate + oxidized [NADPH--hemoprotein reductase] + H2O + H(+). The protein operates within lipid metabolism; leukotriene B4 degradation. It participates in lipid metabolism; arachidonate metabolism. Inhibited by carbon monoxide (CO). Its function is as follows. A cytochrome P450 monooxygenase involved in the metabolism of various endogenous substrates, including fatty acids and their oxygenated derivatives (oxylipins). Mechanistically, uses molecular oxygen inserting one oxygen atom into a substrate, and reducing the second into a water molecule, with two electrons provided by NADPH via cytochrome P450 reductase (CPR; NADPH-ferrihemoprotein reductase). May play a role in inactivation of pro-inflammatory and anti-inflammatory oxylipins during the resolution of inflammation. In terms of biological role, catalyzes predominantly the oxidation of the terminal carbon (omega-oxidation) of oxylipins in myeloid cells, displaying higher affinity for arachidonate metabolite leukotriene B4 (LTB4). Inactivates LTB4 via three successive oxidative transformations to 20-hydroxy-LTB4, then to 20-oxo-LTB4 and to 20-carboxy-LTB4. Has omega-hydroxylase activity toward long-chain fatty acid epoxides with preference for 8,9-epoxy-(5Z,11Z,14Z)-eicosatrienoate (EET) and 9,10-epoxyoctadecanoate. Omega-hydroxylates monohydroxy polyunsaturated fatty acids (PUFAs), including hydroxyeicosatetraenoates (HETEs) and hydroxyeicosapentaenoates (HEPEs), to dihydroxy compounds. Contributes to the degradation of saturated very long-chain fatty acids (VLCFAs) such as docosanoic acid, by catalyzing successive omega-oxidations to the corresponding dicarboxylic acid, thereby initiating chain shortening. Has low hydroxylase activity toward PUFAs. Catalyzes predominantly the oxidation of the terminal carbon (omega-oxidation) of polyunsaturated fatty acids (PUFAs). Participates in the conversion of arachidonic acid to 20-hydroxyeicosatetraenoic acid (20-HETE), a signaling molecule acting both as vasoconstrictive and natriuretic with overall effect on arterial blood pressure. Has high omega-hydroxylase activity toward other PUFAs, including eicosatrienoic acid (ETA), eicosapentaenoic acid (EPA) and docosahexaenoic acid (DHA). Can also catalyze the oxidation of the penultimate carbon (omega-1 oxidation) of PUFAs with lower efficiency. Contributes to the degradation of saturated very long-chain fatty acids (VLCFAs) such as docosanoic acid and hexacosanoic acid, by catalyzing successive omega-oxidations to the corresponding dicarboxylic acids, thereby initiating chain shortening. Omega-hydroxylates long-chain 3-hydroxy fatty acids, likely initiating the oxidative conversion to the corresponding 3-hydroxydicarboxylic fatty acids. Has omega-hydroxylase activity toward long-chain fatty acid epoxides with preference for 8,9-epoxy-(5Z,11Z,14Z)-eicosatrienoate (EET) and 9,10-epoxyoctadecanoate. The sequence is that of Cytochrome P450 4F3 from Homo sapiens (Human).